A 231-amino-acid chain; its full sequence is MIP18 family protein YHR122W (231 aa).

2 disordered regions span residues 1 to 26 (MSEF…DSTK) and 75 to 100 (LTSD…EEEE). Serine 2 bears the N-acetylserine mark. Residues 76-90 (TSDEDSLPAESEDES) are compositionally biased toward acidic residues.

It belongs to the MIP18 family.

In terms of biological role, may play a role in chromosome segregation through establishment of sister chromatid cohesion. This chain is MIP18 family protein YHR122W, found in Saccharomyces cerevisiae (strain ATCC 204508 / S288c) (Baker's yeast).